The sequence spans 115 residues: Large ribosomal subunit protein uL24 (115 aa).

Belongs to the universal ribosomal protein uL24 family. Part of the 50S ribosomal subunit.

Its function is as follows. One of two assembly initiator proteins, it binds directly to the 5'-end of the 23S rRNA, where it nucleates assembly of the 50S subunit. Functionally, one of the proteins that surrounds the polypeptide exit tunnel on the outside of the subunit. The chain is Large ribosomal subunit protein uL24 from Beutenbergia cavernae (strain ATCC BAA-8 / DSM 12333 / CCUG 43141 / JCM 11478 / NBRC 16432 / NCIMB 13614 / HKI 0122).